The following is a 266-amino-acid chain: Interleukin-1 beta (266 aa).

Positions 1–113 (MATVPEPINE…ETSSDELLCD (113 aa)) are excised as a propeptide.

This sequence belongs to the IL-1 family. As to quaternary structure, monomer. In its precursor form, weakly interacts with full-length MEFV; the mature cytokine does not interact at all. Interacts with integrins ITGAV:ITGBV and ITGA5:ITGB1; integrin-binding is required for IL1B signaling. Interacts with cargo receptor TMED10; the interaction is direct and is required for the secretion of IL1B mature form. Interacts with HSP90AB1; the interaction facilitates cargo translocation into the ERGIC. Interacts with HSP90B1; the interaction facilitates cargo translocation into the ERGIC.

It is found in the cytoplasm. It localises to the cytosol. The protein resides in the secreted. The protein localises to the lysosome. Its subcellular location is the extracellular exosome. Functionally, potent pro-inflammatory cytokine. Initially discovered as the major endogenous pyrogen, induces prostaglandin synthesis, neutrophil influx and activation, T-cell activation and cytokine production, B-cell activation and antibody production, and fibroblast proliferation and collagen production. Promotes Th17 differentiation of T-cells. Synergizes with IL12/interleukin-12 to induce IFNG synthesis from T-helper 1 (Th1) cells. Plays a role in angiogenesis by inducing VEGF production synergistically with TNF and IL6. Involved in transduction of inflammation downstream of pyroptosis: its mature form is specifically released in the extracellular milieu by passing through the gasdermin-D (GSDMD) pore. This chain is Interleukin-1 beta (IL1B), found in Capra hircus (Goat).